The primary structure comprises 151 residues: Ribosome maturation factor RimP (151 aa).

It belongs to the RimP family.

It is found in the cytoplasm. In terms of biological role, required for maturation of 30S ribosomal subunits. The sequence is that of Ribosome maturation factor RimP from Aliivibrio fischeri (strain ATCC 700601 / ES114) (Vibrio fischeri).